Here is a 930-residue protein sequence, read N- to C-terminus: Endoplasmic reticulum aminopeptidase 1 (930 aa).

At 1-2 the chain is on the cytoplasmic side; the sequence is MP. A helical; Signal-anchor for type II membrane protein membrane pass occupies residues 3–23; it reads SLLPLVLTFLSVSSPSWCQNS. The Lumenal portion of the chain corresponds to 24-930; that stretch reads DIESLKASNG…WLQKEKPELL (907 aa). Asn59 and Asn143 each carry an N-linked (GlcNAc...) asparagine glycan. Substrate contacts are provided by residues Glu172 and 306 to 310; that span reads GAMEN. His342 contributes to the Zn(2+) binding site. Glu343 is a catalytic residue. The Zn(2+) site is built by His346 and Glu365. An intrachain disulfide couples Cys393 to Cys432. Asn403 and Asn655 each carry an N-linked (GlcNAc...) asparagine glycan. Cysteines 725 and 732 form a disulfide. Residues Asn749 and Asn890 are each glycosylated (N-linked (GlcNAc...) asparagine).

The protein belongs to the peptidase M1 family. In terms of assembly, monomer. May also exist as a heterodimer; with ERAP2. Interacts with RBMX. Requires Zn(2+) as cofactor. Post-translationally, N-glycosylated.

It is found in the endoplasmic reticulum membrane. Aminopeptidase that plays a central role in peptide trimming, a step required for the generation of most HLA class I-binding peptides. Peptide trimming is essential to customize longer precursor peptides to fit them to the correct length required for presentation on MHC class I molecules. Strongly prefers substrates 9-16 residues long. Rapidly degrades 13-mer to a 9-mer and then stops. Preferentially hydrolyzes the residue Leu and peptides with a hydrophobic C-terminus, while it has weak activity toward peptides with charged C-terminus. May play a role in the inactivation of peptide hormones. May be involved in the regulation of blood pressure through the inactivation of angiotensin II and/or the generation of bradykinin in the kidney. The protein is Endoplasmic reticulum aminopeptidase 1 (Erap1) of Mus musculus (Mouse).